A 101-amino-acid chain; its full sequence is ATP-dependent Clp protease adapter protein ClpS (101 aa).

A disordered region spans residues 1-24 (MVVASAPAKPGSVGQQESASRDAT). The segment covering 13–23 (VGQQESASRDA) has biased composition (polar residues).

This sequence belongs to the ClpS family. In terms of assembly, binds to the N-terminal domain of the chaperone ClpA.

Involved in the modulation of the specificity of the ClpAP-mediated ATP-dependent protein degradation. This chain is ATP-dependent Clp protease adapter protein ClpS, found in Mycobacterium marinum (strain ATCC BAA-535 / M).